Consider the following 252-residue polypeptide: Mitochondrial cardiolipin hydrolase (252 aa).

Residues 1-4 are Mitochondrial intermembrane-facing; sequence MGRL. Residues 1–39 are required for mitochondrial localization; it reads MGRLSWQVAAAAAVGLALTLEALPWVLRWLRSRRRRPRR. The chain crosses the membrane as a helical span at residues 5 to 27; that stretch reads SWQVAAAAAVGLALTLEALPWVL. The Cytoplasmic portion of the chain corresponds to 28–252; it reads RWLRSRRRRP…TCGTSSESQT (225 aa). The C3H1-type; atypical zinc-finger motif lies at 45 to 78; it reads PSQVTCTEALLRAPGAELAELPEGCPCGLPHGES. Residues 151–178 enclose the PLD phosphodiesterase domain; sequence DPGYMHHKFAIVDKRVLITGSLNWTTQA. Catalysis depends on residues histidine 156, lysine 158, and aspartate 163.

This sequence belongs to the phospholipase D family. MitoPLD/Zucchini subfamily. Homodimer. Interacts with MOV10L1. Interacts with MIGA1 and MIGA2; possibly facilitating homodimer formation. Interacts with GK2. In terms of tissue distribution, predominantly expressed in testis and ovary, but not limited to gonads (at protein level). It is also found in brain, heart, pituitary gland, prostate, pancreas, thyroid, bone marrow, lung and muscle.

It is found in the mitochondrion outer membrane. The protein resides in the golgi apparatus. It carries out the reaction a cardiolipin + H2O = a 1,2-diacyl-sn-glycero-3-phospho-(1'-sn-glycerol) + a 1,2-diacyl-sn-glycero-3-phosphate + H(+). Its activity is regulated as follows. MYC stimulates its phospholipase activity. MIGA1 and MIGA2 increase PLD6 self-association affinity and affects the homodimer conformation facilitating its phospholipase activity over the nuclease activity. Single stranded DNA (ssDNA) hydrolase activity does not depend upon, but is stimulated by the presence of Ca(2+) and Mn(2+). Functionally, presents phospholipase and nuclease activities, depending on the different physiological conditions. Interaction with Mitoguardin (MIGA1 or MIGA2) affects the dimer conformation, facilitating the lipase activity over the nuclease activity. Plays a key role in mitochondrial fusion and fission via its phospholipase activity. In its phospholipase role, it uses the mitochondrial lipid cardiolipin as substrate to generate phosphatidate (PA or 1,2-diacyl-sn-glycero-3-phosphate), a second messenger signaling lipid. Production of PA facilitates Mitofusin-mediated fusion, whereas the cleavage of PA by the Lipin family of phosphatases produces diacylgycerol (DAG) which promotes mitochondrial fission. Both Lipin and DAG regulate mitochondrial dynamics and membrane fusion/fission, important processes for adapting mitochondrial metabolism to changes in cell physiology. Mitochondrial fusion enables cells to cope with the increased nucleotide demand during DNA synthesis. Mitochondrial function and dynamics are closely associated with biological processes such as cell growth, proliferation, and differentiation. Mediator of MYC activity, promotes mitochondrial fusion and activates AMPK which in turn inhibits YAP/TAZ, thereby inducing cell growth and proliferation. The endonuclease activity plays a critical role in PIWI-interacting RNA (piRNA) biogenesis during spermatogenesis. Implicated in spermatogenesis and sperm fertility in testicular germ cells, its single strand-specific nuclease activity is critical for the biogenesis/maturation of PIWI-interacting RNA (piRNA). MOV10L1 selectively binds to piRNA precursors and funnels them to the endonuclease that catalyzes the first cleavage step of piRNA processing to generate piRNA intermediate fragments that are subsequently loaded to Piwi proteins. Cleaves either DNA or RNA substrates with similar affinity, producing a 5' phosphate end, in this way it participates in the processing of primary piRNA transcripts. piRNAs provide essential protection against the activity of mobile genetic elements. piRNA-mediated transposon silencing is thus critical for maintaining genome stability, in particular in germline cells when transposons are mobilized as a consequence of wide-spread genomic demethylation. PA may act as signaling molecule in the recognition/transport of the precursor RNAs of primary piRNAs. Interacts with tesmin in testes, suggesting a role in spermatogenesis via association with its interacting partner. The polypeptide is Mitochondrial cardiolipin hydrolase (PLD6) (Homo sapiens (Human)).